A 352-amino-acid polypeptide reads, in one-letter code: Nuclear receptor subfamily 1 group I member 3 (352 aa).

A DNA-binding region (nuclear receptor) is located at residues 8 to 83 (LRNCVVCGDQ…AGMRKDMILS (76 aa)). Residues 11–31 (CVVCGDQATGYHFNALTCEGC) form an NR C4-type zinc finger. Phosphothreonine; by PKC is present on T38. Residues 47 to 71 (CPFAGSCEVSKTQRRHCPACRLQKC) form an NR C4-type zinc finger. In terms of domain architecture, NR LBD spans 109-352 (EQEELIRTLL…MMPLLQEICS (244 aa)).

This sequence belongs to the nuclear hormone receptor family. NR1 subfamily. Interacts with ECT2. Heterodimer of NR1I3 and RXR. Interacts with PSMC4. Directly interacts with DNAJC7. The DNAJC7-NR1I3 complex may also include HSP90. Interacts with CRY1. Interacts with CRY2 in a ligand-dependent manner. In terms of processing, phosphorylated at Thr-38 by PKC, dephosphorylation of Thr-38 is required for nuclear translocation and activation. Predominantly expressed in liver.

Its subcellular location is the nucleus. The protein localises to the cytoplasm. The protein resides in the cytoskeleton. Its function is as follows. Binds and transactivates the retinoic acid response elements that control expression of the retinoic acid receptor beta 2 and alcohol dehydrogenase 3 genes. Transactivates both the phenobarbital responsive element module of the human CYP2B6 gene and the CYP3A4 xenobiotic response element. The sequence is that of Nuclear receptor subfamily 1 group I member 3 (NR1I3) from Homo sapiens (Human).